The sequence spans 229 residues: Ras-related protein Rab-33B (229 aa).

Positions 43, 44, 45, 46, 47, 48, 62, and 65 each coordinate GTP. Thr-47 is a Mg(2+) binding site. The Switch 1 motif lies at 56 to 68; it reads GRFPDRTEATIGV. Positions 65 and 88 each coordinate Mg(2+). Positions 89–108 match the Switch 2 motif; that stretch reads TAGQERFRKSMVQHYYRNVH. 6 residues coordinate GTP: Gly-91, Asn-148, Lys-149, Asp-151, Ala-179, and Lys-180. 2 S-geranylgeranyl cysteine lipidation sites follow: Cys-227 and Cys-229. Cys-229 bears the Cysteine methyl ester mark.

This sequence belongs to the small GTPase superfamily. Rab family. As to quaternary structure, interacts (GTP- and GDP-bound forms) with ATG16L1; the complex consists of a tetramer where two RAB33B molecules bind independently one molecule of the ATG16L1 homodimer; the interaction promotes ATG12-ATG5-ATG16L1 complex recruitment to phagophores. Interacts with ATG16L2; however interaction is approximately hundred times lower than for ATG16L1. Interacts with RIC1 (via C-terminus domain); the interaction is direct with a preference for RAB33B-GTP. Interacts with RGP1. Mg(2+) is required as a cofactor. Post-translationally, prenylated. Ubiquitous.

The protein resides in the golgi apparatus membrane. It localises to the golgi apparatus. Its subcellular location is the cis-Golgi network. It is found in the preautophagosomal structure membrane. It carries out the reaction GTP + H2O = GDP + phosphate + H(+). Regulated by guanine nucleotide exchange factors (GEFs) which promote the exchange of bound GDP for free GTP. Regulated by GTPase activating proteins (GAPs) such as SGSM2 which increase the GTP hydrolysis activity. Inhibited by GDP dissociation inhibitors (GDIs). The small GTPases Rab are key regulators of intracellular membrane trafficking, from the formation of transport vesicles to their fusion with membranes. Rabs cycle between an inactive GDP-bound form and an active GTP-bound form that is able to recruit to membranes different sets of downstream effectors directly responsible for vesicle formation, movement, tethering and fusion. RAB33B acts, in coordination with RAB6A, to regulate intra-Golgi retrograde trafficking. Participates in autophagosome formation by recruiting the ATG12-ATG5-ATG16L1 complex to phagophores, probably in a nucleotide-independent manner. The polypeptide is Ras-related protein Rab-33B (Mus musculus (Mouse)).